The following is a 216-amino-acid chain: Serine acetyltransferase (216 aa).

The protein belongs to the transferase hexapeptide repeat family.

It is found in the cytoplasm. The catalysed reaction is L-serine + acetyl-CoA = O-acetyl-L-serine + CoA. The protein operates within amino-acid biosynthesis; L-cysteine biosynthesis; L-cysteine from L-serine: step 1/2. Its activity is regulated as follows. Inhibited by cysteine. Functionally, catalyzes the acetylation of serine by acetyl-CoA to produce O-acetylserine (OAS). In Bacillus licheniformis (strain ATCC 14580 / DSM 13 / JCM 2505 / CCUG 7422 / NBRC 12200 / NCIMB 9375 / NCTC 10341 / NRRL NRS-1264 / Gibson 46), this protein is Serine acetyltransferase.